A 317-amino-acid chain; its full sequence is MEKVYVAGAIPEVGLKLLQEHFEVEMYEGKGLVDKDTLIKGVKNATALISLLSTNVDKDVIDAGKDLKIIANYGAGFNNIDIEYAREKSIDVTNTPKASTNATADLTIGLVLAVARRIVEGDQLSRTTGFDGWAPLFFRGREVSGKTIGIIGLGEIGSAVARRARAFDMDVLYTGPNRKEEKEREIGAKYVDLDTLLKNADFITINAAYNPKMHHLIDTEQFKMMKSTAYLINASRGPIVHEQALVQALKDNEIEGAALDVYEFEPDITDDLKSLNNVVLTPHIGNATFEARDMMSKIVANAAISAVQGEKPQFVVN.

NAD(+)-binding positions include 155–156, 234–236, and D260; these read EI and ASR. R236 is an active-site residue. Residue E265 is part of the active site. H283 (proton donor) is an active-site residue. Position 283-286 (283-286) interacts with NAD(+); sequence HIGN.

Belongs to the D-isomer specific 2-hydroxyacid dehydrogenase family.

In Staphylococcus aureus (strain NCTC 8325 / PS 47), this protein is Putative 2-hydroxyacid dehydrogenase SAOUHSC_02577.